A 101-amino-acid chain; its full sequence is Putative defensin-like protein 307 (101 aa).

Positions 1–22 (MEKSALIFIGILLFSTCTSIMA) are cleaved as a signal peptide. 3 disulfides stabilise this stretch: cysteine 29-cysteine 49, cysteine 35-cysteine 54, and cysteine 40-cysteine 56.

It belongs to the DEFL family.

Its subcellular location is the secreted. The polypeptide is Putative defensin-like protein 307 (Arabidopsis thaliana (Mouse-ear cress)).